Here is a 1335-residue protein sequence, read N- to C-terminus: Phospholipid-transporting ATPase IK (1335 aa).

The Cytoplasmic portion of the chain corresponds to 1–74 (MDGVHLGENL…LYEQFHRMSN (74 aa)). The chain crosses the membrane as a helical span at residues 75–95 (LYFLFIIILQGIPEISTLPWF). At 96-295 (TLFAPLVCLF…LDLMMNKLVA (200 aa)) the chain is on the exoplasmic loop side. A helical membrane pass occupies residues 296-316 (LIFLSLVIASLLLTVGFTFMV). At 317–339 (KQFKAKHYYMSPTHGRSDAMESF) the chain is on the cytoplasmic side. Residues 340–360 (FIFWGFLILLSVMVPMAMFII) traverse the membrane as a helical segment. The Exoplasmic loop segment spans residues 361–917 (AEFIYLGNSI…YMRVCKFLRY (557 aa)). The active-site 4-aspartylphosphate intermediate is D407. ATP is bound by residues D407, K408, T409, E504, F545, K568, R601, T681, G682, D683, R831, and K837. D407 contacts Mg(2+). Residue T409 participates in Mg(2+) binding. D857 contacts Mg(2+). Residues N860 and D861 each coordinate ATP. D861 contacts Mg(2+). A helical membrane pass occupies residues 918–938 (FFYKTVASMMAQIWFSLVNGF). The Cytoplasmic portion of the chain corresponds to 939–946 (SAQPLYEG). The chain crosses the membrane as a helical span at residues 947-967 (WFLALFNLLYSTLPVLYIGLF). Residues 968 to 995 (EQDVTAEKSLKMPELYMAGQKGELFNYS) are Exoplasmic loop-facing. A helical membrane pass occupies residues 996–1016 (IFMQAITHGTITSMINFFVTV). Topologically, residues 1017 to 1033 (MVSSDMSKAGSSHDYQS) are cytoplasmic. The chain crosses the membrane as a helical span at residues 1034-1054 (LGVLVAISSLLSVTLEVMLVV). A topological domain (exoplasmic loop) is located at residue K1055. Residues 1056–1076 (YWTLLFVGAVVLSLSSYVLMT) form a helical membrane-spanning segment. At 1077–1104 (SLTQSLWMYRISPKTFPFLFADYNVLFE) the chain is on the cytoplasmic side. Residues 1105–1125 (PCSLLLIVLNVALNVLPMLAL) traverse the membrane as a helical segment. Over 1126 to 1335 (RTIHRTVLKQ…SQLEVPRKQS (210 aa)) the chain is Exoplasmic loop. Disordered regions lie at residues 1192–1215 (VDDSDGGTVCESLNPPEEDIPLQN), 1236–1280 (FGKG…GKLL), and 1314–1335 (SPLWRDSASSSPSQLEVPRKQS). Composition is skewed to polar residues over residues 1246–1255 (PNTSSQTMEK) and 1266–1276 (QKLPTTTSATS).

It belongs to the cation transport ATPase (P-type) (TC 3.A.3) family. Type IV subfamily. Mg(2+) serves as cofactor. In terms of tissue distribution, expressed in testis, specifically in spermatids within seminiferous tubules (at protein level).

Its subcellular location is the cytoplasmic vesicle. The protein localises to the secretory vesicle. It localises to the acrosome membrane. The protein resides in the endoplasmic reticulum membrane. The catalysed reaction is ATP + H2O + phospholipidSide 1 = ADP + phosphate + phospholipidSide 2.. It catalyses the reaction a 1,2-diacyl-sn-glycero-3-phospho-L-serine(out) + ATP + H2O = a 1,2-diacyl-sn-glycero-3-phospho-L-serine(in) + ADP + phosphate + H(+). Its function is as follows. P4-ATPase flippase which catalyzes the hydrolysis of ATP coupled to the transport of aminophospholipids from the outer to the inner leaflet of various membranes and ensures the maintenance of asymmetric distribution of phospholipids. Phospholipid translocation also seems to be implicated in vesicle formation and in uptake of lipid signaling molecules. May be responsible for the maintenance of asymmetric distribution of phosphatidylserine (PS) in spermatozoa membranes. Involved in acrosome reactions and binding of spermatozoa to zona pellucida. This is Phospholipid-transporting ATPase IK from Mus musculus (Mouse).